Consider the following 560-residue polypeptide: Kinesin light chain 1 (560 aa).

Positions 27–156 (KTKQVIQGLE…HLEFMNQLKK (130 aa)) form a coiled coil. Over residues 156 to 176 (KYDDDISPSEDKDSDSSKEPL) the composition is skewed to basic and acidic residues. A disordered region spans residues 156-203 (KYDDDISPSEDKDSDSSKEPLDDLFPNDEDDPGQGIQQQHSSAAAAAQ). A Phosphoserine modification is found at Ser-162. Residues 188–203 (GQGIQQQHSSAAAAAQ) are compositionally biased toward low complexity. TPR repeat units follow at residues 213 to 246 (LRTL…LEKT), 255 to 288 (ATML…REKT), 297 to 330 (AATL…REKV), 339 to 372 (AKQL…YQTK), and 381 to 414 (AKTK…AHER). Tyr-449 bears the Phosphotyrosine mark. Ser-460 bears the Phosphoserine mark. The TPR 6 repeat unit spans residues 464-497 (TTTLKNLGALYRRQGKFEAAETLEEAALRSRKQG). Phosphoserine occurs at positions 521 and 524.

Belongs to the kinesin light chain family. Oligomeric complex composed of two heavy chains and two light chains. Interacts with SPAG9. Interacts with ATCAY; may link mitochondria to KLC1 and regulate mitochondria localization into neuron projections. Interacts (via TPR repeats) with TOR1A; the interaction associates TOR1A with the kinesin oligomeric complex. Interacts with BORCS5. Interacts with MAPK8IP3/JIP3 and NTRK2/TRKB; interaction with NTRK2/TRKB is mediated by MAPK8IP3/JIP3. Interacts with CLSTN1; phosphorylation at Ser-460 inhibits interaction with CLSTN1. Phosphorylation at Ser-460 by ERK inhibits interaction with CLSTN1 and localization to cytoplasmic vesicles. As to expression, expressed in brain (at protein level).

It is found in the cell projection. The protein resides in the growth cone. It localises to the cytoplasmic vesicle. Its subcellular location is the cytoplasm. The protein localises to the cytoskeleton. Its function is as follows. Kinesin is a microtubule-associated force-producing protein that may play a role in organelle transport. The light chain may function in coupling of cargo to the heavy chain or in the modulation of its ATPase activity. The protein is Kinesin light chain 1 (Klc1) of Rattus norvegicus (Rat).